The following is a 678-amino-acid chain: MAANVGSMFQYWKRFDLQQLQRELDATATVLANRQDESEQSRKRLIEQSREFKKNTPEDLRKQVAPLLKSFQGEIDALSKRSKEAEAAFLNVYKRLIDVPDPVPALDLGQQLQLKVQRLHDIETENQKLRETLEEYNKEFAEVKNQEVTIKALKEKIREYEQTLKNQAETIALEKEQKLQNDFAEKERKLQETQMSTTSKLEEAEHKVQSLQTALEKTRTELFDLKTKYDEETTAKADEIEMIMTDLERANQRAEVAQREAETLREQLSSANHSLQLASQIQKAPDVEQAIEVLTRSSLEVELAAKEREIAQLVEDVQRLQASLTKLRENSASQISQLEQQLSAKNSTLKQLEEKLKGQADYEEVKKELNILKSMEFAPSEGAGTQDAAKPLEVLLLEKNRSLQSENAALRISNSDLSGRCAELQVRITEAVATATEQRELIARLEQDLSIIQSIQRPDAEGAAEHRLEKIPEPIKEATALFYGPAAPASGALPEGQVDSLLSIISSQRERFRARNQELEAENRLAQHTLQALQSELDSLRADNIKLFEKIKFLQSYPGRGSGSDDTELRYSSQYEERLDPFSSFSKRERQRKYLSLSPWDKATLSMGRLVLSNKMARTIGFFYTLFLHCLVFLVLYKLAWSESMERDCATFCAKKFADHLHKFHENDNGAAAGDLWQ.

At 1–619 (MAANVGSMFQ…LVLSNKMART (619 aa)) the chain is on the cytoplasmic side. 2 coiled-coil regions span residues 67 to 450 (LLKS…QDLS) and 502 to 556 (LSII…FLQS). Ser586 carries the post-translational modification Phosphoserine. Residues 620-640 (IGFFYTLFLHCLVFLVLYKLA) traverse the membrane as a helical; Anchor for type IV membrane protein segment. Topologically, residues 641 to 678 (WSESMERDCATFCAKKFADHLHKFHENDNGAAAGDLWQ) are lumenal.

The protein belongs to the CASP family. Homodimer; disulfide-linked. Interacts with GOLGA5.

It is found in the golgi apparatus membrane. May be involved in intra-Golgi retrograde transport. The chain is Protein CASP (CUX1) from Homo sapiens (Human).